A 294-amino-acid polypeptide reads, in one-letter code: Shikimate dehydrogenase (NADP(+)) (294 aa).

Residues 23 to 25 and threonine 70 each bind shikimate; that span reads SRS. Lysine 74 serves as the catalytic Proton acceptor. Residues asparagine 95 and aspartate 110 each contribute to the shikimate site. Residues 135–139, 159–164, and methionine 232 each bind NADP(+); these read GAGGA and NRTASR. A shikimate-binding site is contributed by tyrosine 234. Glycine 255 lines the NADP(+) pocket.

Belongs to the shikimate dehydrogenase family. In terms of assembly, homodimer.

The enzyme catalyses shikimate + NADP(+) = 3-dehydroshikimate + NADPH + H(+). It functions in the pathway metabolic intermediate biosynthesis; chorismate biosynthesis; chorismate from D-erythrose 4-phosphate and phosphoenolpyruvate: step 4/7. In terms of biological role, involved in the biosynthesis of the chorismate, which leads to the biosynthesis of aromatic amino acids. Catalyzes the reversible NADPH linked reduction of 3-dehydroshikimate (DHSA) to yield shikimate (SA). In Cupriavidus pinatubonensis (strain JMP 134 / LMG 1197) (Cupriavidus necator (strain JMP 134)), this protein is Shikimate dehydrogenase (NADP(+)).